The following is a 69-amino-acid chain: MSFNLRGAVLANVSGNSQDQLQETIVDAIQSGEEKMLPGLGVLFEVIWKNADENEKHEMLETLEQGLKK.

Belongs to the SspI family.

The protein localises to the spore core. This is Small, acid-soluble spore protein I from Bacillus cereus (strain G9842).